Here is a 194-residue protein sequence, read N- to C-terminus: Protein GrpE (194 aa).

The protein belongs to the GrpE family. In terms of assembly, homodimer.

It localises to the cytoplasm. In terms of biological role, participates actively in the response to hyperosmotic and heat shock by preventing the aggregation of stress-denatured proteins, in association with DnaK and GrpE. It is the nucleotide exchange factor for DnaK and may function as a thermosensor. Unfolded proteins bind initially to DnaJ; upon interaction with the DnaJ-bound protein, DnaK hydrolyzes its bound ATP, resulting in the formation of a stable complex. GrpE releases ADP from DnaK; ATP binding to DnaK triggers the release of the substrate protein, thus completing the reaction cycle. Several rounds of ATP-dependent interactions between DnaJ, DnaK and GrpE are required for fully efficient folding. The sequence is that of Protein GrpE from Aliivibrio fischeri (strain ATCC 700601 / ES114) (Vibrio fischeri).